Here is a 404-residue protein sequence, read N- to C-terminus: Multidrug resistance protein MdtG (404 aa).

The next 11 membrane-spanning stretches (helical) occupy residues 19–39, 56–76, 90–110, 113–133, 144–164, 171–191, 222–242, 254–274, 288–308, 317–337, and 376–396; these read LGCFLTGAAFSLVMPFLPLYV, LVFSITFLFSAIASPFWGGLA, LGMAIVMLLMGMAQNIWQFLI, ALLGLLGGFIPNANALIATQA, TLSTGGVSGALLGPLAGGLLA, PVFFITASVLFICFLLTFFFI, LFVTTLIIQVATGSIAPILTL, IAFISGMIASVPGVAALLSAP, ILIVALIISVLLLIPMSFVQT, FLLGAADGALLPAVQTLLVYN, and AVFCVTAGVVLFNAIYSWNSL.

This sequence belongs to the major facilitator superfamily. DHA1 family. MdtG (TC 2.A.1.2.20) subfamily.

It is found in the cell inner membrane. The chain is Multidrug resistance protein MdtG from Salmonella paratyphi A (strain ATCC 9150 / SARB42).